The following is a 233-amino-acid chain: Mediator of RNA polymerase II transcription subunit 7 (233 aa).

Residue Lys185 forms a Glycyl lysine isopeptide (Lys-Gly) (interchain with G-Cter in SUMO1); alternate linkage. A Glycyl lysine isopeptide (Lys-Gly) (interchain with G-Cter in SUMO2); alternate cross-link involves residue Lys185. The tract at residues 188–213 is disordered; that stretch reads PMDADDSNNCTGQSDQQRENSGHRRD. At Ser194 the chain carries Phosphoserine. The span at 203-213 shows a compositional bias: basic and acidic residues; the sequence is QQRENSGHRRD.

It belongs to the Mediator complex subunit 7 family. Component of the Mediator complex, which is composed of MED1, MED4, MED6, MED7, MED8, MED9, MED10, MED11, MED12, MED13, MED13L, MED14, MED15, MED16, MED17, MED18, MED19, MED20, MED21, MED22, MED23, MED24, MED25, MED26, MED27, MED29, MED30, MED31, CCNC, CDK8 and CDC2L6/CDK11. The MED12, MED13, CCNC and CDK8 subunits form a distinct module termed the CDK8 module. Mediator containing the CDK8 module is less active than Mediator lacking this module in supporting transcriptional activation. Individual preparations of the Mediator complex lacking one or more distinct subunits have been variously termed ARC, CRSP, DRIP, PC2, SMCC and TRAP.

Its subcellular location is the nucleus. In terms of biological role, component of the Mediator complex, a coactivator involved in the regulated transcription of nearly all RNA polymerase II-dependent genes. Mediator functions as a bridge to convey information from gene-specific regulatory proteins to the basal RNA polymerase II transcription machinery. Mediator is recruited to promoters by direct interactions with regulatory proteins and serves as a scaffold for the assembly of a functional preinitiation complex with RNA polymerase II and the general transcription factors. This is Mediator of RNA polymerase II transcription subunit 7 (MED7) from Sus scrofa (Pig).